We begin with the raw amino-acid sequence, 309 residues long: MFSPADNIFIILITGEFIIGILGNGYIGLVNWIDWIKKKKISTIDCILTNLVISRICLISVMVVNGIVIVLYPDVYTKTKLQIVICTFWTFANYLNMWFTACLNVFYSLKVANSSHPLFLWLKRKIDMVVRWILLGCFAISLLVSLIIATVLSHDYRFHAIAKHKRNVTEMFHVSKMPYFEPLTLFNLLAIVPFIVSLMSFFLLVRSLWRHTKQIKLYATGGRDPSTEAHVRAIKTMTLLIFFFFLYYITSLLVXFSYLITNYKLAMAFGEIVAILYPSGHSLILIILNNKLRQASVRMLTCRKIACVT.

At 1–7 the chain is on the extracellular side; it reads MFSPADN. A helical transmembrane segment spans residues 8–28; that stretch reads IFIILITGEFIIGILGNGYIG. The Cytoplasmic portion of the chain corresponds to 29 to 50; it reads LVNWIDWIKKKKISTIDCILTN. Residues 51-71 form a helical membrane-spanning segment; it reads LVISRICLISVMVVNGIVIVL. Residues 72-82 lie on the Extracellular side of the membrane; that stretch reads YPDVYTKTKLQ. Residues 83–103 traverse the membrane as a helical segment; sequence IVICTFWTFANYLNMWFTACL. The Cytoplasmic segment spans residues 104–131; sequence NVFYSLKVANSSHPLFLWLKRKIDMVVR. The chain crosses the membrane as a helical span at residues 132 to 152; the sequence is WILLGCFAISLLVSLIIATVL. At 153 to 184 the chain is on the extracellular side; it reads SHDYRFHAIAKHKRNVTEMFHVSKMPYFEPLT. N167 carries N-linked (GlcNAc...) asparagine glycosylation. Residues 185 to 205 traverse the membrane as a helical segment; that stretch reads LFNLLAIVPFIVSLMSFFLLV. Topologically, residues 206–239 are cytoplasmic; it reads RSLWRHTKQIKLYATGGRDPSTEAHVRAIKTMTL. The chain crosses the membrane as a helical span at residues 240 to 260; that stretch reads LIFFFFLYYITSLLVXFSYLI. At 261–266 the chain is on the extracellular side; the sequence is TNYKLA. Residues 267–287 traverse the membrane as a helical segment; it reads MAFGEIVAILYPSGHSLILII. The Cytoplasmic segment spans residues 288 to 309; it reads LNNKLRQASVRMLTCRKIACVT.

This sequence belongs to the G-protein coupled receptor T2R family.

It is found in the membrane. In terms of biological role, receptor that may play a role in the perception of bitterness and is gustducin-linked. May play a role in sensing the chemical composition of the gastrointestinal content. The activity of this receptor may stimulate alpha gustducin, mediate PLC-beta-2 activation and lead to the gating of TRPM5. The chain is Taste receptor type 2 member 8 (TAS2R8) from Papio hamadryas (Hamadryas baboon).